Reading from the N-terminus, the 381-residue chain is Chaperone protein DnaJ (381 aa).

A J domain is found at 5–70 (DFYEVLGVSR…QKKAAYDQYG (66 aa)). Residues 136 to 214 (GVTKEIEVPT…CHGQGRKQKT (79 aa)) form a CR-type zinc finger. 8 residues coordinate Zn(2+): C149, C152, C166, C169, C188, C191, C202, and C205. CXXCXGXG motif repeat units lie at residues 149–156 (CDSCDGSG), 166–173 (CGTCHGHG), 188–195 (CPTCHGKG), and 202–209 (CNECHGQG).

It belongs to the DnaJ family. In terms of assembly, homodimer. Requires Zn(2+) as cofactor.

The protein localises to the cytoplasm. Functionally, participates actively in the response to hyperosmotic and heat shock by preventing the aggregation of stress-denatured proteins and by disaggregating proteins, also in an autonomous, DnaK-independent fashion. Unfolded proteins bind initially to DnaJ; upon interaction with the DnaJ-bound protein, DnaK hydrolyzes its bound ATP, resulting in the formation of a stable complex. GrpE releases ADP from DnaK; ATP binding to DnaK triggers the release of the substrate protein, thus completing the reaction cycle. Several rounds of ATP-dependent interactions between DnaJ, DnaK and GrpE are required for fully efficient folding. Also involved, together with DnaK and GrpE, in the DNA replication of plasmids through activation of initiation proteins. This is Chaperone protein DnaJ from Vibrio parahaemolyticus serotype O3:K6 (strain RIMD 2210633).